The chain runs to 338 residues: Fructose-1,6-bisphosphatase class 1 (338 aa).

Residues Glu91, Asp113, Leu115, and Asp116 each coordinate Mg(2+). Substrate contacts are provided by residues 116-119 (DGSS), Asn208, and Lys274. Glu280 is a binding site for Mg(2+).

This sequence belongs to the FBPase class 1 family. Homotetramer. It depends on Mg(2+) as a cofactor.

The protein localises to the cytoplasm. The catalysed reaction is beta-D-fructose 1,6-bisphosphate + H2O = beta-D-fructose 6-phosphate + phosphate. The protein operates within carbohydrate biosynthesis; gluconeogenesis. In Ralstonia nicotianae (strain ATCC BAA-1114 / GMI1000) (Ralstonia solanacearum), this protein is Fructose-1,6-bisphosphatase class 1.